The sequence spans 188 residues: Large ribosomal subunit protein eL18B (188 aa).

The segment at 153 to 188 is disordered; that stretch reads GKAPGTPHSRTKPYVLSKGRKFERARGRRASRGYKN. Basic residues predominate over residues 178–188; it reads RGRRASRGYKN.

This sequence belongs to the eukaryotic ribosomal protein eL18 family. As to quaternary structure, component of the large ribosomal subunit.

It is found in the cytoplasm. It localises to the cytosol. The protein localises to the rough endoplasmic reticulum. Its function is as follows. Component of the large ribosomal subunit. The ribosome is a large ribonucleoprotein complex responsible for the synthesis of proteins in the cell. This chain is Large ribosomal subunit protein eL18B (rpl18-b), found in Xenopus laevis (African clawed frog).